A 332-amino-acid chain; its full sequence is MVTYKDSGVNIEEGYKSVKLMKDYASKTFIPGVINNLGSFAGMFEIGSGYKNPVLVSGTDGVGTKLAVAFATKKYDTVGIDCTAMCVNDILCHGAKPVFFLDYIACGKLEAEVASDLVKGVSEGCSQAGCALIGGETAEMPGFYKEGEYDLAGFAVGLVDKDKIIDGSKIEDGNVLIGIASSGIHSNGYSLVRKLITDFNEEFNGKKIGEVLLTPTKIYVKPVLKVLESFDVKGMAHITGGGFYENIPRMFKGDFTAVINKESLEIPEIFKHIMSLGVDENHAFNTFNMGIGFVICAAKEDKDGIIASLKESGEKAYEIGYVKAGGSGVCIK.

It belongs to the AIR synthase family.

It is found in the cytoplasm. The catalysed reaction is 2-formamido-N(1)-(5-O-phospho-beta-D-ribosyl)acetamidine + ATP = 5-amino-1-(5-phospho-beta-D-ribosyl)imidazole + ADP + phosphate + H(+). The protein operates within purine metabolism; IMP biosynthesis via de novo pathway; 5-amino-1-(5-phospho-D-ribosyl)imidazole from N(2)-formyl-N(1)-(5-phospho-D-ribosyl)glycinamide: step 2/2. The polypeptide is Phosphoribosylformylglycinamidine cyclo-ligase (Clostridium acetobutylicum (strain ATCC 824 / DSM 792 / JCM 1419 / IAM 19013 / LMG 5710 / NBRC 13948 / NRRL B-527 / VKM B-1787 / 2291 / W)).